Reading from the N-terminus, the 442-residue chain is Interferon-related developmental regulator 2 (442 aa).

Residues 1–15 (MPRARKGNTLRKGGQ) show a composition bias toward basic residues. The disordered stretch occupies residues 1 to 71 (MPRARKGNTL…DVVDEQGQQE (71 aa)). Over residues 43–56 (TASECPSLLSTTAE) the composition is skewed to polar residues.

The protein belongs to the IFRD family. In terms of assembly, associates with ribosomes; promoting ribosome inactivation. Expressed in many tissues including heart, brain, placenta, lung, liver, skeletal muscle, kidney and pancreas.

Functionally, ribosome-binding protein that acts as an inhibitor of mRNA translation by promoting ribosome inactivation. Associates with the P- and E-sites of the ribosome and inserts a C-terminal helix into the mRNA exit channel to preclude translation. The protein is Interferon-related developmental regulator 2 of Homo sapiens (Human).